Reading from the N-terminus, the 752-residue chain is Catalase-peroxidase (752 aa).

The disordered stretch occupies residues 1 to 21 (MSNESKCPFHQTAGGGTTNRD). A cross-link (tryptophyl-tyrosyl-methioninium (Trp-Tyr) (with M-271)) is located at residues 91 to 245 (WHSAGTYRIG…LAAVQMGLIY (155 aa)). H92 functions as the Proton acceptor in the catalytic mechanism. The tract at residues 204 to 228 (QAPGQGDLVAEPAKHGEEQNRDLSA) is disordered. A compositionally biased stretch (basic and acidic residues) spans 215–228 (PAKHGEEQNRDLSA). Positions 245-271 (YVNPEGPEGNPDPVASGKDIRETFGRM) form a cross-link, tryptophyl-tyrosyl-methioninium (Tyr-Met) (with W-91). Residue H286 coordinates heme. The disordered stretch occupies residues 366–391 (AHQWQPKEGKGAGTVPDAHDPSKRHA).

Belongs to the peroxidase family. Peroxidase/catalase subfamily. Homodimer or homotetramer. Heme b is required as a cofactor. In terms of processing, formation of the three residue Trp-Tyr-Met cross-link is important for the catalase, but not the peroxidase activity of the enzyme.

The catalysed reaction is H2O2 + AH2 = A + 2 H2O. It catalyses the reaction 2 H2O2 = O2 + 2 H2O. Bifunctional enzyme with both catalase and broad-spectrum peroxidase activity. The sequence is that of Catalase-peroxidase from Pseudomonas putida (strain W619).